The sequence spans 190 residues: Protein GrpE (190 aa).

Over residues 1–18 the composition is skewed to polar residues; that stretch reads MTETPNTSSEEIQTSEPS. Residues 1–21 are disordered; the sequence is MTETPNTSSEEIQTSEPSPDN.

Belongs to the GrpE family. In terms of assembly, homodimer.

Its subcellular location is the cytoplasm. Functionally, participates actively in the response to hyperosmotic and heat shock by preventing the aggregation of stress-denatured proteins, in association with DnaK and GrpE. It is the nucleotide exchange factor for DnaK and may function as a thermosensor. Unfolded proteins bind initially to DnaJ; upon interaction with the DnaJ-bound protein, DnaK hydrolyzes its bound ATP, resulting in the formation of a stable complex. GrpE releases ADP from DnaK; ATP binding to DnaK triggers the release of the substrate protein, thus completing the reaction cycle. Several rounds of ATP-dependent interactions between DnaJ, DnaK and GrpE are required for fully efficient folding. The protein is Protein GrpE of Chlamydia trachomatis serovar L2b (strain UCH-1/proctitis).